Reading from the N-terminus, the 185-residue chain is Cuticle protein 18.6, isoform A (185 aa).

A run of 7 repeats spans residues 21-24 (AAPA), 33-36 (AAPV), 41-44 (AAPV), 54-57 (AAPA), 133-136 (AAPV), 139-142 (AAPV), and 150-153 (AAPV). One can recognise a Chitin-binding type R&amp;R domain in the interval 64–134 (HPQYSFAYNV…KEAGAHPAAA (71 aa)).

Component of the cuticle of migratory locust which contains more than 100 different structural proteins. In Locusta migratoria (Migratory locust), this protein is Cuticle protein 18.6, isoform A.